The sequence spans 579 residues: Glucose starvation modulator protein 1 (579 aa).

A DNA-binding region (zn(2)-C6 fungal-type) is located at residues 20–48; it reads CVFCHEKHLQCDLGRPCQNCSKRGIGDTC. Over residues 43–53 the composition is skewed to basic and acidic residues; it reads GIGDTCRDKER. Disordered stretches follow at residues 43 to 75 and 319 to 342; these read GIGD…STKS and QMAS…GETV. Residues 54-64 are compositionally biased toward basic residues; the sequence is KPRKRGPRKVK. Polar residues predominate over residues 330-339; sequence NDTSPESQGG. The PAS domain maps to 444 to 516; sequence LLEYESMAKL…DIFHEYLAFG (73 aa).

It belongs to the ERT1/acuK family.

It localises to the nucleus. Its function is as follows. Transcription factor which regulates nonfermentable carbon utilization. The polypeptide is Glucose starvation modulator protein 1 (GSM1) (Kluyveromyces lactis (strain ATCC 8585 / CBS 2359 / DSM 70799 / NBRC 1267 / NRRL Y-1140 / WM37) (Yeast)).